We begin with the raw amino-acid sequence, 315 residues long: Acetyl-coenzyme A carboxylase carboxyl transferase subunit alpha (315 aa).

The 254-residue stretch at 40 to 293 (LEDKKIALTK…KKNVLAALDR (254 aa)) folds into the CoA carboxyltransferase C-terminal domain.

The protein belongs to the AccA family. Acetyl-CoA carboxylase is a heterohexamer composed of biotin carboxyl carrier protein (AccB), biotin carboxylase (AccC) and two subunits each of ACCase subunit alpha (AccA) and ACCase subunit beta (AccD).

Its subcellular location is the cytoplasm. It catalyses the reaction N(6)-carboxybiotinyl-L-lysyl-[protein] + acetyl-CoA = N(6)-biotinyl-L-lysyl-[protein] + malonyl-CoA. The protein operates within lipid metabolism; malonyl-CoA biosynthesis; malonyl-CoA from acetyl-CoA: step 1/1. Functionally, component of the acetyl coenzyme A carboxylase (ACC) complex. First, biotin carboxylase catalyzes the carboxylation of biotin on its carrier protein (BCCP) and then the CO(2) group is transferred by the carboxyltransferase to acetyl-CoA to form malonyl-CoA. This chain is Acetyl-coenzyme A carboxylase carboxyl transferase subunit alpha, found in Marinomonas sp. (strain MWYL1).